Reading from the N-terminus, the 1388-residue chain is DNA-directed RNA polymerase subunit beta (1388 aa).

It belongs to the RNA polymerase beta chain family. The RNAP catalytic core consists of 2 alpha, 1 beta, 1 beta' and 1 omega subunit. When a sigma factor is associated with the core the holoenzyme is formed, which can initiate transcription.

It carries out the reaction RNA(n) + a ribonucleoside 5'-triphosphate = RNA(n+1) + diphosphate. Its function is as follows. DNA-dependent RNA polymerase catalyzes the transcription of DNA into RNA using the four ribonucleoside triphosphates as substrates. The protein is DNA-directed RNA polymerase subunit beta of Xylella fastidiosa (strain 9a5c).